A 463-amino-acid polypeptide reads, in one-letter code: Soluble pyridine nucleotide transhydrogenase (463 aa).

Residue 35–44 participates in FAD binding; that stretch reads EDKPTVGGNC.

This sequence belongs to the class-I pyridine nucleotide-disulfide oxidoreductase family. It depends on FAD as a cofactor.

The protein resides in the cytoplasm. The catalysed reaction is NAD(+) + NADPH = NADH + NADP(+). Conversion of NADPH, generated by peripheral catabolic pathways, to NADH, which can enter the respiratory chain for energy generation. The chain is Soluble pyridine nucleotide transhydrogenase from Marinobacter nauticus (strain ATCC 700491 / DSM 11845 / VT8) (Marinobacter aquaeolei).